The chain runs to 198 residues: Type 1 fimbriae regulatory protein FimE (198 aa).

Positions 2–184 (SKRRYLTGKE…NAARFAGLWE (183 aa)) constitute a Tyr recombinase domain. Residues R41, K66, H136, R139, and H162 contribute to the active site. Residue Y171 is the O-(3'-phospho-DNA)-tyrosine intermediate of the active site.

The protein belongs to the 'phage' integrase family.

Functionally, fimE is one of the 2 regulatory proteins which control the phase variation of type 1 fimbriae in E.coli. These proteins mediate the periodic inversion of a 300bp DNA segment that harbors the promoter for the fimbrial structural gene, fimA. FimE switches fimA off. In Escherichia coli O6:H1 (strain CFT073 / ATCC 700928 / UPEC), this protein is Type 1 fimbriae regulatory protein FimE (fimE).